The sequence spans 160 residues: Transcription antitermination protein NusB (160 aa).

Belongs to the NusB family.

Functionally, involved in transcription antitermination. Required for transcription of ribosomal RNA (rRNA) genes. Binds specifically to the boxA antiterminator sequence of the ribosomal RNA (rrn) operons. The polypeptide is Transcription antitermination protein NusB (Allorhizobium ampelinum (strain ATCC BAA-846 / DSM 112012 / S4) (Agrobacterium vitis (strain S4))).